The primary structure comprises 150 residues: Large ribosomal subunit protein bL9 (150 aa).

It belongs to the bacterial ribosomal protein bL9 family.

Its function is as follows. Binds to the 23S rRNA. This is Large ribosomal subunit protein bL9 from Arthrobacter sp. (strain FB24).